The chain runs to 110 residues: DNA-directed RNA polymerase subunit omega (110 aa).

Belongs to the RNA polymerase subunit omega family. In terms of assembly, the RNAP catalytic core consists of 2 alpha, 1 beta, 1 beta' and 1 omega subunit. When a sigma factor is associated with the core the holoenzyme is formed, which can initiate transcription.

The enzyme catalyses RNA(n) + a ribonucleoside 5'-triphosphate = RNA(n+1) + diphosphate. In terms of biological role, promotes RNA polymerase assembly. Latches the N- and C-terminal regions of the beta' subunit thereby facilitating its interaction with the beta and alpha subunits. This Nocardioides sp. (strain ATCC BAA-499 / JS614) protein is DNA-directed RNA polymerase subunit omega.